A 469-amino-acid polypeptide reads, in one-letter code: Transcription factor E2FB (469 aa).

2 disordered regions span residues methionine 1 to valine 28 and glutamine 84 to proline 118. 2 stretches are compositionally biased toward polar residues: residues glutamine 8–serine 22 and serine 100–proline 118. Residues arginine 129–glycine 194 mediate DNA binding. The stretch at glutamate 202–arginine 246 forms a coiled coil. Residues leucine 210–leucine 238 form a leucine-zipper region. Positions proline 319–threonine 374 are disordered. The span at glutamate 349–threonine 374 shows a compositional bias: basic and acidic residues. A retinoblastoma protein binding region spans residues aspartate 403–tryptophan 419. Positions aspartate 426 to serine 469 are disordered. The span at glutamate 447–serine 469 shows a compositional bias: low complexity.

It belongs to the E2F/DP family. Heterodimer with DP proteins. Interacts (via dimerization domain) preferentially with DPA, but also with DPB. Interacts with PURA1 and retinoblastoma-related protein RBR1. Component of a DREAM-like complex which modulates a variety of developmentally regulated genes and of the mitotic genes in proliferating and differentiated cells. Interacts with MYB3R4 only at early stages of leaves development. In terms of processing, phosphorylated. As to expression, expressed in proliferating cells and several differentiated tissues. Detected in inflorescence and shoot apical meristems, cotyledonary vascular tissues, leaf primordia, young leaves, base of trichomes, central cylinder and elongation zone of roots, lateral root primordia, flowers, pistils of immature flowers and pollen grains.

The protein localises to the cytoplasm. Its subcellular location is the nucleus. Functionally, transcription activator that binds DNA cooperatively with DP proteins through the E2 recognition site, 5'-TTTC[CG]CGC-3' found in the promoter region of a number of genes whose products are involved in cell cycle regulation or in DNA replication. The binding of retinoblastoma-related proteins represses transactivation. Involved in the control of cell-cycle progression from G1 to S phase and from G2 to M phase. Stimulates cell proliferation and delays differentiation. Represses cell enlargement and endoreduplication in auxin-free conditions. This Arabidopsis thaliana (Mouse-ear cress) protein is Transcription factor E2FB (E2FB).